The chain runs to 885 residues: Alanine--tRNA ligase (885 aa).

H571, H575, C674, and H678 together coordinate Zn(2+).

This sequence belongs to the class-II aminoacyl-tRNA synthetase family. Zn(2+) serves as cofactor.

Its subcellular location is the cytoplasm. The enzyme catalyses tRNA(Ala) + L-alanine + ATP = L-alanyl-tRNA(Ala) + AMP + diphosphate. Catalyzes the attachment of alanine to tRNA(Ala) in a two-step reaction: alanine is first activated by ATP to form Ala-AMP and then transferred to the acceptor end of tRNA(Ala). Also edits incorrectly charged Ser-tRNA(Ala) and Gly-tRNA(Ala) via its editing domain. The polypeptide is Alanine--tRNA ligase (Clavibacter sepedonicus (Clavibacter michiganensis subsp. sepedonicus)).